Here is a 276-residue protein sequence, read N- to C-terminus: Large ribosomal subunit protein uL2 (276 aa).

The disordered stretch occupies residues 213 to 264 (WLGRRPHNRGVVMNPVDHPHGGGEGRTSGGRHPVTPWGKPTKGYKTRTNKRT).

It belongs to the universal ribosomal protein uL2 family. Part of the 50S ribosomal subunit. Forms a bridge to the 30S subunit in the 70S ribosome.

In terms of biological role, one of the primary rRNA binding proteins. Required for association of the 30S and 50S subunits to form the 70S ribosome, for tRNA binding and peptide bond formation. It has been suggested to have peptidyltransferase activity; this is somewhat controversial. Makes several contacts with the 16S rRNA in the 70S ribosome. This is Large ribosomal subunit protein uL2 from Granulibacter bethesdensis (strain ATCC BAA-1260 / CGDNIH1).